Reading from the N-terminus, the 577-residue chain is Protein O-linked-mannose beta-1,4-N-acetylglucosaminyltransferase 2 (577 aa).

Topologically, residues 1–4 (MNIA) are cytoplasmic. Residues 5 to 25 (AVFNALLVSVLATVLWKYIKL) traverse the membrane as a helical; Signal-anchor for type II membrane protein segment. Topologically, residues 26–577 (REHAFMVEEE…PFADVLLCST (552 aa)) are lumenal. Residues N98, N275, N335, and N540 are each glycosylated (N-linked (GlcNAc...) asparagine). Residues 481–577 (KVRDARCQAS…PFADVLLCST (97 aa)) form the Fibronectin type-III domain.

This sequence belongs to the glycosyltransferase 61 family.

It is found in the endoplasmic reticulum membrane. It carries out the reaction 3-O-(alpha-D-mannosyl)-L-threonyl-[protein] + UDP-N-acetyl-alpha-D-glucosamine = 3-O-(N-acetyl-beta-D-glucosaminyl-(1-&gt;4)-alpha-D-mannosyl)-L-threonyl-[protein] + UDP + H(+). Its pathway is protein modification; protein glycosylation. Functionally, O-linked mannose beta-1,4-N-acetylglucosaminyltransferase that transfers UDP-N-acetyl-D-glucosamine to the 4-position of the mannose to generate N-acetyl-D-glucosamine-beta-1,4-O-D-mannosylprotein. Involved in the biosynthesis of the phosphorylated O-mannosyl trisaccharide (N-acetylgalactosamine-beta-3-N-acetylglucosamine-beta-4-(phosphate-6-)mannose), a carbohydrate structure present in alpha-dystroglycan (DAG1), which is required for binding laminin G-like domain-containing extracellular proteins with high affinity. This chain is Protein O-linked-mannose beta-1,4-N-acetylglucosaminyltransferase 2 (POMGNT2), found in Gallus gallus (Chicken).